The following is a 435-amino-acid chain: Xylose isomerase (435 aa).

Residues H100 and D103 contribute to the active site. Positions 231, 267, 270, 295, 306, 308, and 338 each coordinate Mg(2+).

This sequence belongs to the xylose isomerase family. Homotetramer. Mg(2+) serves as cofactor.

The protein resides in the cytoplasm. The catalysed reaction is alpha-D-xylose = alpha-D-xylulofuranose. The chain is Xylose isomerase from Brucella ovis (strain ATCC 25840 / 63/290 / NCTC 10512).